We begin with the raw amino-acid sequence, 353 residues long: Serine proteinase inhibitor 1 (353 aa).

Belongs to the serpin family. Poxviruses subfamily.

The protein localises to the host cytoplasm. Plays a role in mediating viral host range. May act to inhibit a caspase independent form of apoptosis to allow efficient virus replication in infected cells. This Vaccinia virus (strain Copenhagen) (VACV) protein is Serine proteinase inhibitor 1 (OPG208).